A 1038-amino-acid chain; its full sequence is Zinc finger protein 628 (1038 aa).

Positions 1-31 (MAGSHVDMAPASTTEGTGEKPGPTAPAPTPA) are disordered. Residues 13–22 (TTEGTGEKPG) show a composition bias toward low complexity. 6 C2H2-type zinc fingers span residues 34–56 (YECGECGKSFRWSSRLLHHQRTH), 62–84 (YKCPDCPKAFKGSSALLYHQRGH), 90–112 (YQCPDCPKAFKRSSLLQIHRSVH), 118–140 (FTCGQCGLAFKWSSHYQYHLRQH), 146–168 (YPCPDCPKAFKNSSSLRRHRHVH), and 174–196 (YTCGICGKSFTQSTNLRQHQRVH). At Thr-197 the chain carries Phosphothreonine. A C2H2-type 7 zinc finger spans residues 202 to 224 (FRCPLCPKTFTHSSNLLLHHRTH). 2 disordered regions span residues 220–242 (HHRTHGPAPGPAPAPAPPGETSR) and 254–273 (LQPRSPPEPPAPPPQPPPVV). Pro residues-rich tracts occupy residues 227-237 (APGPAPAPAPP) and 257-273 (RSPPEPPAPPPQPPPVV). 7 consecutive C2H2-type zinc fingers follow at residues 346-368 (FACLPCGKSFRTVAGLSRHQHSH), 376-398 (FRCGSCDGAFPQLASLLAHQQCH), 446-468 (YKCAECGKAFKGSSGLRYHLRDH), 474-496 (YQCGECGKAFKRSSLLAIHQRVH), 502-524 (FTCGQCGLTFKWSSHYQYHLRLH), 530-552 (YACTECGKAFRNTSCLRRHRHVH), and 558-580 (HSCSVCGKSFAQTSNLRQHQRVH). At Thr-581 the chain carries Phosphothreonine. C2H2-type zinc fingers lie at residues 586-608 (FRCPLCPKTFTHSSNLLLHQRTH) and 614-636 (FACPICGRGFVMAAYLQRHLRTH). 2 disordered regions span residues 637–661 (TPATTTSGTTGSAVASQPPAPLAAA) and 717–763 (PSSV…AGQG). Over residues 723–733 (PTPPPPPPPPK) the composition is skewed to pro residues. The span at 734-756 (VILLPPASAGGPGSGAARPGPRS) shows a compositional bias: low complexity. 4 repeat units span residues 811–821 (VQLQPAQEVAT), 822–832 (VQLQPAQEVTT), 833–843 (VQLQPAQEVTT), and 844–854 (VQLQPLTGQVS). Residues 811 to 854 (VQLQPAQEVATVQLQPAQEVTTVQLQPAQEVTTVQLQPLTGQVS) form a 4 X 11 AA tandem repeats of VQLQP-[AL]-[QT]-[EG]-[VQ]-[ATV]-[ST] region. Residues 922–1038 (DGEQTRLCVQ…LPAVQLVHTF (117 aa)) form an interaction with TAF4B region.

In terms of assembly, interacts with TAF4B. As to expression, expressed widely in testis, in both germline and somatic cells. Seems to have particularly strong expression in meiotic spermatocytes, postmeiotic round spermatids and Sertoli cells. Not detected in elongating spermatids or mature sperm (at protein level). Expressed in testis, ovary, spleen, lung, brain, liver and kidney. Expressed in D3 embryonic stem cells and F9 embryonal carcinoma cells.

It is found in the nucleus. In terms of biological role, transcriptional activator. Binds DNA on GT-box consensus sequence 5'-TTGGTT-3'. Plays a role in spermiogenesis. The chain is Zinc finger protein 628 from Mus musculus (Mouse).